The chain runs to 179 residues: ATP synthase subunit delta (179 aa).

Belongs to the ATPase delta chain family. As to quaternary structure, F-type ATPases have 2 components, F(1) - the catalytic core - and F(0) - the membrane proton channel. F(1) has five subunits: alpha(3), beta(3), gamma(1), delta(1), epsilon(1). F(0) has three main subunits: a(1), b(2) and c(10-14). The alpha and beta chains form an alternating ring which encloses part of the gamma chain. F(1) is attached to F(0) by a central stalk formed by the gamma and epsilon chains, while a peripheral stalk is formed by the delta and b chains.

It localises to the cell inner membrane. Its function is as follows. F(1)F(0) ATP synthase produces ATP from ADP in the presence of a proton or sodium gradient. F-type ATPases consist of two structural domains, F(1) containing the extramembraneous catalytic core and F(0) containing the membrane proton channel, linked together by a central stalk and a peripheral stalk. During catalysis, ATP synthesis in the catalytic domain of F(1) is coupled via a rotary mechanism of the central stalk subunits to proton translocation. In terms of biological role, this protein is part of the stalk that links CF(0) to CF(1). It either transmits conformational changes from CF(0) to CF(1) or is implicated in proton conduction. The polypeptide is ATP synthase subunit delta (Bordetella avium (strain 197N)).